A 359-amino-acid polypeptide reads, in one-letter code: Phospho-N-acetylmuramoyl-pentapeptide-transferase (359 aa).

10 helical membrane-spanning segments follow: residues 3-23 (QIMI…PALI), 55-75 (VAIL…GLAF), 80-100 (ITAS…VGFL), 117-137 (TAKT…VLQF), 156-176 (IATV…VVSA), 187-207 (LDGL…LITF), 231-251 (LALI…WNAA), 255-275 (IFMG…LSVT), 280-300 (ILAV…VLQI), and 334-354 (FWLL…GEWL).

Belongs to the glycosyltransferase 4 family. MraY subfamily. Mg(2+) is required as a cofactor.

Its subcellular location is the cell inner membrane. The enzyme catalyses UDP-N-acetyl-alpha-D-muramoyl-L-alanyl-gamma-D-glutamyl-meso-2,6-diaminopimeloyl-D-alanyl-D-alanine + di-trans,octa-cis-undecaprenyl phosphate = di-trans,octa-cis-undecaprenyl diphospho-N-acetyl-alpha-D-muramoyl-L-alanyl-D-glutamyl-meso-2,6-diaminopimeloyl-D-alanyl-D-alanine + UMP. Its pathway is cell wall biogenesis; peptidoglycan biosynthesis. Its function is as follows. Catalyzes the initial step of the lipid cycle reactions in the biosynthesis of the cell wall peptidoglycan: transfers peptidoglycan precursor phospho-MurNAc-pentapeptide from UDP-MurNAc-pentapeptide onto the lipid carrier undecaprenyl phosphate, yielding undecaprenyl-pyrophosphoryl-MurNAc-pentapeptide, known as lipid I. This chain is Phospho-N-acetylmuramoyl-pentapeptide-transferase, found in Mycobacterium marinum (strain ATCC BAA-535 / M).